Consider the following 638-residue polypeptide: MAAQAGDDAWRCQGCGDYVAPNQRLYRTVSEAWPTSCFRCSECQDSLTNWYYEKDGKLYCHKDYWGKFGEFCHGCSLLMTGPVMVAGEFKYHPECFACMSCKVIIEDGDAYALVQHATLYCGKCHNEVVLAPMFERLSTESVQDQLPYSVTHISMPATTEGRRGFSVSVESACSNYATTVQVREVNRMHISPNNRNAIHPGDRILEINGAPVRTLRVEEVEDAISQTTQTLQLLIEHDPVSQRLDQLQLDARLSPCAQNDRHAHTLSPLDTKENLEGTLRRRSLRRSNSISKSPGPSSPKEPLLLSRDISRSESLRCSSSCSQQIFRPCDLIHGEVLGKGFFGQAIKVTHKATGKVMVMNELIRCDEETQKTFLTEVKVMRSLDHPNVLKFIGVLYKDKKLNLLTEYIEGGTLKDFLRNVDPFPWQQKVRFAKGIASGMAYLHSMCIIHRDLNSHNCLIKLDKTVVVADFGLSRLIVEERKKPPVEKATTKKRTLRKSDRKKRYTVVGNPYWMAPEMLNGKSYDETVDVFSFGIVLCEIIGQVYADPDCLPRTLDFGLNVKLFWEKFVPEECPPAFFPLAAICCRLEPESRPAFSKLEDFFEALSLYLGELGIPLPTELEDLDHTVSMEYGLIRNPPP.

2 consecutive LIM zinc-binding domains span residues 12–63 (CQGC…CHKD) and 72–124 (CHGC…CGKC). Residues 152–239 (HISMPATTEG…TLQLLIEHDP (88 aa)) enclose the PDZ domain. Positions 280-304 (RRRSLRRSNSISKSPGPSSPKEPLL) are disordered. A compositionally biased stretch (low complexity) spans 286-304 (RSNSISKSPGPSSPKEPLL). Phosphoserine occurs at positions 293 and 298. The Protein kinase domain maps to 331 to 608 (LIHGEVLGKG…DFFEALSLYL (278 aa)). ATP is bound by residues 337 to 345 (LGKGFFGQA) and Asn-360. Residue Asp-451 is part of the active site. Thr-505 bears the Phosphothreonine; by ROCK1 and CDC42BP mark.

The protein belongs to the protein kinase superfamily. TKL Ser/Thr protein kinase family. In terms of assembly, binds ROCK1 and MARF1. Interacts with NISCH. In terms of processing, phosphorylated on serine and/or threonine residues by ROCK1.

The protein resides in the cytoplasm. The protein localises to the cytoskeleton. Its subcellular location is the spindle. It localises to the microtubule organizing center. It is found in the centrosome. The catalysed reaction is L-seryl-[protein] + ATP = O-phospho-L-seryl-[protein] + ADP + H(+). The enzyme catalyses L-threonyl-[protein] + ATP = O-phospho-L-threonyl-[protein] + ADP + H(+). Its function is as follows. Serine/threonine-protein kinase that plays an essential role in the regulation of actin filament dynamics. Acts downstream of several Rho family GTPase signal transduction pathways. Involved in astral microtubule organization and mitotic spindle orientation during early stages of mitosis by mediating phosphorylation of TPPP. Displays serine/threonine-specific phosphorylation of myelin basic protein and histone (MBP) in vitro. Suppresses ciliogenesis via multiple pathways; phosphorylation of CFL1, suppression of directional trafficking of ciliary vesicles to the ciliary base, and by facilitating YAP1 nuclear localization where it acts as a transcriptional corepressor of the TEAD4 target genes AURKA and PLK1. The sequence is that of LIM domain kinase 2 (LIMK2) from Bos taurus (Bovine).